A 364-amino-acid chain; its full sequence is Chaperone protein DnaJ 1 (364 aa).

The 65-residue stretch at 7 to 71 folds into the J domain; that stretch reads DYYEILGVNR…ERRSEYDAIL (65 aa). The CR-type zinc finger occupies 124-200; it reads GCEKEIIYSR…CYGRGRVSAQ (77 aa). Cysteine 137, cysteine 140, cysteine 154, cysteine 157, cysteine 174, cysteine 177, cysteine 188, and cysteine 191 together coordinate Zn(2+). CXXCXGXG motif repeat units follow at residues 137 to 144, 154 to 161, 174 to 181, and 188 to 195; these read CPVCEGMG, CHACNGEG, CSVCKGKG, and CPTCYGRG.

The protein belongs to the DnaJ family. In terms of assembly, homodimer. Requires Zn(2+) as cofactor.

Its subcellular location is the cytoplasm. Participates actively in the response to hyperosmotic and heat shock by preventing the aggregation of stress-denatured proteins and by disaggregating proteins, also in an autonomous, DnaK-independent fashion. Unfolded proteins bind initially to DnaJ; upon interaction with the DnaJ-bound protein, DnaK hydrolyzes its bound ATP, resulting in the formation of a stable complex. GrpE releases ADP from DnaK; ATP binding to DnaK triggers the release of the substrate protein, thus completing the reaction cycle. Several rounds of ATP-dependent interactions between DnaJ, DnaK and GrpE are required for fully efficient folding. Also involved, together with DnaK and GrpE, in the DNA replication of plasmids through activation of initiation proteins. The protein is Chaperone protein DnaJ 1 of Aquifex aeolicus (strain VF5).